A 321-amino-acid chain; its full sequence is Phosphatidate cytidylyltransferase, mitochondrial (321 aa).

Belongs to the TAM41 family. The cofactor is Mg(2+). Co(2+) serves as cofactor. It depends on Cu(2+) as a cofactor.

Its subcellular location is the mitochondrion inner membrane. It carries out the reaction a 1,2-diacyl-sn-glycero-3-phosphate + CTP + H(+) = a CDP-1,2-diacyl-sn-glycerol + diphosphate. It participates in phospholipid metabolism; CDP-diacylglycerol biosynthesis; CDP-diacylglycerol from sn-glycerol 3-phosphate: step 3/3. Functionally, catalyzes the formation of CDP-diacylglycerol (CDP-DAG) from phosphatidic acid (PA) in the mitochondrial inner membrane. Required for the biosynthesis of the dimeric phospholipid cardiolipin, which stabilizes supercomplexes of the mitochondrial respiratory chain in the mitochondrial inner membrane. This is Phosphatidate cytidylyltransferase, mitochondrial from Caenorhabditis elegans.